Consider the following 151-residue polypeptide: Transcriptional regulator MraZ (151 aa).

SpoVT-AbrB domains are found at residues 5–52 (ATAV…PLDE) and 81–124 (ATEC…SDVE).

Belongs to the MraZ family. Forms oligomers.

The protein localises to the cytoplasm. The protein resides in the nucleoid. In Haemophilus influenzae (strain 86-028NP), this protein is Transcriptional regulator MraZ.